The chain runs to 649 residues: Echinoderm microtubule-associated protein-like 2 (649 aa).

The interval 10-649 is tandem atypical propeller in EMLs; it reads KEVIFSMEEG…DTSVLQWRVA (640 aa). WD repeat units follow at residues 56 to 93, 97 to 144, 151 to 192, 195 to 234, 241 to 280, 285 to 323, 369 to 406, 410 to 447, 452 to 489, 495 to 535, 564 to 602, and 609 to 648; these read KLDWVYGYRGRDCRANLYLLPTGEVVYFVASVAVLYSV, RQRH…VWDS, HVLG…VWDW, ESKVVDSKCSNEAVLVATFHPTDPSLLITCGKSHIYFWSL, KRQGLFEKHEKPKYVLCVTFLEGGDVVTGDSGGNLYVWGK, ITQEVQGAHDGGVFALCALRDGTLVSGGGRDRRVVLWGS, FSLLVQGHVEELWGLATHPSRAQFVTCGQDKLVHLWSS, QPVWSRSIEDPARSAGFHPSGSVLAVGTVTGRWLLLDT, LVAIHTDGNEQISVVSFSPDGAYLAVGSHDNLVYVYTV, KVSR…YWDP, FGIWPEGADGTDINAVARSHDGKLLVSADDFGKVHLFSY, and ALSHKYGGHSSHVTNVAFLWDDSMALTTGGKDTSVLQWRV. The stretch at 65 to 106 forms a coiled coil; it reads GRDCRANLYLLPTGEVVYFVASVAVLYSVEEQRQRHYLGHND.

This sequence belongs to the WD repeat EMAP family. In terms of assembly, interacts with GRID2 and may also interact with GRID1. Interacts with EML3. Binds unpolymerized tubulins via its WD repeat region.

The protein localises to the cytoplasm. Its subcellular location is the cytoskeleton. It localises to the spindle. In terms of biological role, tubulin binding protein that inhibits microtubule nucleation and growth, resulting in shorter microtubules. In Mus musculus (Mouse), this protein is Echinoderm microtubule-associated protein-like 2 (Eml2).